A 507-amino-acid chain; its full sequence is Maturase K (507 aa).

Belongs to the intron maturase 2 family. MatK subfamily.

The protein localises to the plastid. It localises to the chloroplast. Its function is as follows. Usually encoded in the trnK tRNA gene intron. Probably assists in splicing its own and other chloroplast group II introns. This chain is Maturase K, found in Annona muricata (Soursop).